The chain runs to 288 residues: Glycine--tRNA ligase alpha subunit (288 aa).

It belongs to the class-II aminoacyl-tRNA synthetase family. In terms of assembly, tetramer of two alpha and two beta subunits.

It localises to the cytoplasm. The enzyme catalyses tRNA(Gly) + glycine + ATP = glycyl-tRNA(Gly) + AMP + diphosphate. The polypeptide is Glycine--tRNA ligase alpha subunit (Rickettsia rickettsii (strain Iowa)).